We begin with the raw amino-acid sequence, 141 residues long: Hemoglobin subunit alpha (141 aa).

Residues V1 to R141 form the Globin domain. S3 is modified (phosphoserine). K7 bears the N6-succinyllysine mark. T8 bears the Phosphothreonine mark. Position 11 is an N6-succinyllysine (K11). An N6-acetyllysine; alternate modification is found at K16. Position 16 is an N6-succinyllysine; alternate (K16). Y24 is modified (phosphotyrosine). Residue S35 is modified to Phosphoserine. The residue at position 40 (K40) is an N6-succinyllysine. A Phosphoserine modification is found at S49. H58 provides a ligand contact to O2. H87 contacts heme b. Position 102 is a phosphoserine (S102). Residue T108 is modified to Phosphothreonine. Residues S124 and S131 each carry the phosphoserine modification. Phosphothreonine is present on residues T134 and T137. At S138 the chain carries Phosphoserine.

Belongs to the globin family. In terms of assembly, heterotetramer of two alpha chains and two beta chains. As to expression, red blood cells.

Its function is as follows. Involved in oxygen transport from the lung to the various peripheral tissues. Hemopressin acts as an antagonist peptide of the cannabinoid receptor CNR1. Hemopressin-binding efficiently blocks cannabinoid receptor CNR1 and subsequent signaling. This is Hemoglobin subunit alpha (HBA) from Loris tardigradus (Slender loris).